We begin with the raw amino-acid sequence, 165 residues long: Chorismate pyruvate-lyase (165 aa).

Residues methionine 35, arginine 77, leucine 115, and glutamate 156 each coordinate substrate.

Belongs to the UbiC family. As to quaternary structure, monomer.

It is found in the cytoplasm. It carries out the reaction chorismate = 4-hydroxybenzoate + pyruvate. Its pathway is cofactor biosynthesis; ubiquinone biosynthesis. Removes the pyruvyl group from chorismate, with concomitant aromatization of the ring, to provide 4-hydroxybenzoate (4HB) for the ubiquinone pathway. The chain is Chorismate pyruvate-lyase from Salmonella enteritidis PT4 (strain P125109).